A 440-amino-acid chain; its full sequence is D-serine dehydratase (440 aa).

Residue Lys116 is modified to N6-(pyridoxal phosphate)lysine.

This sequence belongs to the serine/threonine dehydratase family. DsdA subfamily. Monomer. Pyridoxal 5'-phosphate is required as a cofactor.

The catalysed reaction is D-serine = pyruvate + NH4(+). This chain is D-serine dehydratase, found in Salmonella choleraesuis (strain SC-B67).